A 98-amino-acid chain; its full sequence is Cell division topological specificity factor (98 aa).

This sequence belongs to the MinE family.

Its function is as follows. Prevents the cell division inhibition by proteins MinC and MinD at internal division sites while permitting inhibition at polar sites. This ensures cell division at the proper site by restricting the formation of a division septum at the midpoint of the long axis of the cell. The chain is Cell division topological specificity factor from Nitrosomonas eutropha (strain DSM 101675 / C91 / Nm57).